Reading from the N-terminus, the 300-residue chain is 4-hydroxy-tetrahydrodipicolinate synthase (300 aa).

Position 45 (threonine 45) interacts with pyruvate. Catalysis depends on tyrosine 140, which acts as the Proton donor/acceptor. The active-site Schiff-base intermediate with substrate is the lysine 169. Isoleucine 210 serves as a coordination point for pyruvate.

This sequence belongs to the DapA family. In terms of assembly, homotetramer; dimer of dimers.

It localises to the cytoplasm. It catalyses the reaction L-aspartate 4-semialdehyde + pyruvate = (2S,4S)-4-hydroxy-2,3,4,5-tetrahydrodipicolinate + H2O + H(+). It functions in the pathway amino-acid biosynthesis; L-lysine biosynthesis via DAP pathway; (S)-tetrahydrodipicolinate from L-aspartate: step 3/4. In terms of biological role, catalyzes the condensation of (S)-aspartate-beta-semialdehyde [(S)-ASA] and pyruvate to 4-hydroxy-tetrahydrodipicolinate (HTPA). The polypeptide is 4-hydroxy-tetrahydrodipicolinate synthase (Helicobacter pylori (strain G27)).